The sequence spans 64 residues: Cytochrome c oxidase subunit 5C-2 (64 aa).

A helical transmembrane segment spans residues 15–34; it reads SVVKELVIGTVLGLAAGGLW.

The protein belongs to the cytochrome c oxidase subunit 5C family.

Its subcellular location is the mitochondrion inner membrane. Functionally, this protein is one of the nuclear-coded polypeptide chains of cytochrome c oxidase, the terminal oxidase in mitochondrial electron transport. This Helianthus annuus (Common sunflower) protein is Cytochrome c oxidase subunit 5C-2 (COX5C2).